A 171-amino-acid polypeptide reads, in one-letter code: tRNA-specific adenosine deaminase (171 aa).

Residues 6-133 (EEQTYFMQEA…ERLNHRVQVE (128 aa)) form the CMP/dCMP-type deaminase domain. His-57 is a Zn(2+) binding site. Glu-59 functions as the Proton donor in the catalytic mechanism. Zn(2+) contacts are provided by Cys-87 and Cys-90.

The protein belongs to the cytidine and deoxycytidylate deaminase family. Homodimer. Zn(2+) serves as cofactor.

It catalyses the reaction adenosine(34) in tRNA + H2O + H(+) = inosine(34) in tRNA + NH4(+). Catalyzes the deamination of adenosine to inosine at the wobble position 34 of tRNA(Arg2). This Streptococcus pyogenes serotype M3 (strain ATCC BAA-595 / MGAS315) protein is tRNA-specific adenosine deaminase.